Consider the following 23-residue polypeptide: Ocellatin-LB2 (23 aa).

The residue at position 23 (asparagine 23) is an Asparagine amide.

In terms of tissue distribution, expressed by the skin glands.

It is found in the secreted. Its function is as follows. Antibacterial peptide that inhibits the Gram-negative bacterium A.actinomycetemcomitans ATCC 29522 (MIC=210 uM). No activity against the bacteria E.coli ATCC 25922 and S.aureus ATCC 25923, or the fungi C.albicans ATCC 18804 and C.lusitaniae ATCC 56936. Does not show hemolytic activity towards rabbit erythrocytes. The protein is Ocellatin-LB2 of Leptodactylus labyrinthicus (Labyrinth frog).